A 284-amino-acid polypeptide reads, in one-letter code: Phosphoenolpyruvate guanylyltransferase (284 aa).

Residues 94-123 form a disordered region; it reads ADLSADEPAGTDAERRADPSAENRASTSAQ. Basic and acidic residues predominate over residues 105–114; the sequence is DAERRADPSA. Positions 203, 219, and 222 each coordinate phosphoenolpyruvate.

Belongs to the CofC family.

It carries out the reaction phosphoenolpyruvate + GTP + H(+) = enolpyruvoyl-2-diphospho-5'-guanosine + diphosphate. Its pathway is cofactor biosynthesis; coenzyme F420 biosynthesis. Functionally, guanylyltransferase that catalyzes the activation of phosphoenolpyruvate (PEP) as enolpyruvoyl-2-diphospho-5'-guanosine, via the condensation of PEP with GTP. It is involved in the biosynthesis of coenzyme F420, a hydride carrier cofactor. The protein is Phosphoenolpyruvate guanylyltransferase of Sanguibacter keddieii (strain ATCC 51767 / DSM 10542 / NCFB 3025 / ST-74).